The following is a 128-amino-acid chain: Large ribosomal subunit protein bL20c (128 aa).

Belongs to the bacterial ribosomal protein bL20 family.

The protein resides in the plastid. The protein localises to the chloroplast. Binds directly to 23S ribosomal RNA and is necessary for the in vitro assembly process of the 50S ribosomal subunit. It is not involved in the protein synthesizing functions of that subunit. The polypeptide is Large ribosomal subunit protein bL20c (Trachelium caeruleum (Blue throatwort)).